Here is a 389-residue protein sequence, read N- to C-terminus: S-adenosylmethionine synthase (389 aa).

Residue His-15 participates in ATP binding. Asp-17 contacts Mg(2+). Glu-43 serves as a coordination point for K(+). Residues Glu-56 and Gln-99 each contribute to the L-methionine site. The tract at residues 99–109 (QSPDIAQGVNE) is flexible loop. ATP contacts are provided by residues 166-168 (DAK), 234-235 (RF), Asp-243, 249-250 (RK), Ala-266, and Lys-270. Residue Asp-243 participates in L-methionine binding. Lys-274 provides a ligand contact to L-methionine.

It belongs to the AdoMet synthase family. As to quaternary structure, homotetramer; dimer of dimers. The cofactor is Mg(2+). Requires K(+) as cofactor.

It localises to the cytoplasm. It catalyses the reaction L-methionine + ATP + H2O = S-adenosyl-L-methionine + phosphate + diphosphate. The protein operates within amino-acid biosynthesis; S-adenosyl-L-methionine biosynthesis; S-adenosyl-L-methionine from L-methionine: step 1/1. Catalyzes the formation of S-adenosylmethionine (AdoMet) from methionine and ATP. The overall synthetic reaction is composed of two sequential steps, AdoMet formation and the subsequent tripolyphosphate hydrolysis which occurs prior to release of AdoMet from the enzyme. The sequence is that of S-adenosylmethionine synthase from Neisseria meningitidis serogroup C / serotype 2a (strain ATCC 700532 / DSM 15464 / FAM18).